The primary structure comprises 546 residues: Smad protein daf-8 (546 aa).

Residues 16 to 137 (AMAQKVLEET…YRWVELPTCQ (122 aa)) form the MH1 domain. Disordered stretches follow at residues 234–268 (LQQSNRQDDEEPGYYRSGLSSPASHAASPREFIPN) and 292–317 (ENFSSENNGNRKPTYADGRPITPIEP). Residues 292–302 (ENFSSENNGNR) are compositionally biased toward polar residues. An MH2 domain is found at 349–546 (WLKLIYYEEG…APPRICSSRT (198 aa)).

The protein belongs to the dwarfin/SMAD family. In terms of assembly, homodimer. Interacts with R-SMAD daf-14 and co-SMAD daf-3. Interacts with orphan nuclear receptor nhr-69. As to expression, expressed in the excretory cell and gonadal distal tip cells (DTCs).

The protein resides in the cytoplasm. It localises to the nucleus. Its function is as follows. Probably a receptor-regulated SMAD (R-SMAD) that is an intracellular signal transducer and transcriptional modulator activated by TGF-beta-like daf-7 signaling. Plays a role in TGF-beta-like daf-7 signaling in regulating entry into a developmentally arrested larval state known as dauer, in response to harsh environmental conditions; partially redundant with R-SMAD daf-14. Plays a role in inhibiting mitosis and promoting a switch to meiosis in the germ line, perhaps by down-regulating lag-2 transcription in the gonadal distal tip cells (DTCs). In cooperation with orphan nuclear receptor nhr-69 modulates the Insulin/IGF-1-like signaling (IIS) pathway, perhaps by regulating expression of the potassium channel exp-2, which in turn modulates the secretion of the insulin-like peptide daf-28. The polypeptide is Smad protein daf-8 (Caenorhabditis elegans).